A 176-amino-acid polypeptide reads, in one-letter code: Transcriptional repressor MprA (176 aa).

The HTH marR-type domain occupies Glu-26–Ser-160.

Its function is as follows. Negative regulator of the multidrug operon emrAB. The polypeptide is Transcriptional repressor MprA (mprA) (Escherichia coli O157:H7).